The sequence spans 541 residues: Arginine--tRNA ligase (541 aa).

Residues 119–129 carry the 'HIGH' region motif; sequence ANPTGPLHIGH.

This sequence belongs to the class-I aminoacyl-tRNA synthetase family. As to quaternary structure, monomer.

Its subcellular location is the cytoplasm. It catalyses the reaction tRNA(Arg) + L-arginine + ATP = L-arginyl-tRNA(Arg) + AMP + diphosphate. This is Arginine--tRNA ligase from Helicobacter pylori (strain HPAG1).